Reading from the N-terminus, the 185-residue chain is Biofilm operon icaADBC HTH-type negative transcriptional regulator IcaR (185 aa).

The region spanning 1 to 59 is the HTH tetR-type domain; the sequence is MKDKIIDNAITLFSEKGYDGTTLDDISKSVNIKKASLYYHYDNKEEIYRKSVENCFNYF. Residues 22–41 constitute a DNA-binding region (H-T-H motif); sequence TLDDISKSVNIKKASLYYHY.

As to quaternary structure, homodimer.

Its function is as follows. Represses transcription of the icaADBC operon necessary for biofilm production. This chain is Biofilm operon icaADBC HTH-type negative transcriptional regulator IcaR (icaR), found in Staphylococcus epidermidis (strain ATCC 35984 / DSM 28319 / BCRC 17069 / CCUG 31568 / BM 3577 / RP62A).